Consider the following 202-residue polypeptide: N-(5'-phosphoribosyl)anthranilate isomerase (202 aa).

It belongs to the TrpF family.

It catalyses the reaction N-(5-phospho-beta-D-ribosyl)anthranilate = 1-(2-carboxyphenylamino)-1-deoxy-D-ribulose 5-phosphate. The protein operates within amino-acid biosynthesis; L-tryptophan biosynthesis; L-tryptophan from chorismate: step 3/5. The chain is N-(5'-phosphoribosyl)anthranilate isomerase from Geobacter metallireducens (strain ATCC 53774 / DSM 7210 / GS-15).